We begin with the raw amino-acid sequence, 197 residues long: Dephospho-CoA kinase (197 aa).

Residues 2 to 197 enclose the DPCK domain; it reads IVGLTGGIAS…YQQILSLNAA (196 aa). Residue 10–15 coordinates ATP; sequence ASGKTL.

This sequence belongs to the CoaE family.

It is found in the cytoplasm. The catalysed reaction is 3'-dephospho-CoA + ATP = ADP + CoA + H(+). Its pathway is cofactor biosynthesis; coenzyme A biosynthesis; CoA from (R)-pantothenate: step 5/5. Its function is as follows. Catalyzes the phosphorylation of the 3'-hydroxyl group of dephosphocoenzyme A to form coenzyme A. In Dichelobacter nodosus (Bacteroides nodosus), this protein is Dephospho-CoA kinase.